Reading from the N-terminus, the 403-residue chain is MRVLVINSGSSSIKYQLIEMDGEKVLCKGIAERIGIEGSRLVHRVNDEKYVIERELPDHEEALKLILNTLVDEKLGVIKDLKEIDAVGHRVVHGGERFKESVLVDEEVLKAIEEVSPLAPLHNPANLMGIKAAMKLLPGVPNVVVFDTAFHQTIPQKAYLYAIPYEYYEKHRIRRYGFHGTSHRYVSKRAAEILGKKLEELKIITCHIGNGASVAAVKYGKCVDTSMGFTPLEGLVMGTRSGDLDPAIPFFIMEKEGISPQEMYDILNKKSGVYGLSKGFSSDMRDIEEAALKGDEWCKLILDIYHYRIAKYIGAYAAAMNGVDAIVFTAGVGENSPITREDVCSYLEFLGVKLDKQKNEETIRGKEGIISTLDSRVKVLVVPTNEELMIARDTKEIVEKIGR.

Position 7 (Asn-7) interacts with Mg(2+). Lys-14 is an ATP binding site. Substrate is bound at residue Arg-90. Asp-147 serves as the catalytic Proton donor/acceptor. Residues 207 to 211 (HIGNG), 283 to 285 (DMR), and 331 to 335 (GVGEN) contribute to the ATP site. Residue Glu-386 coordinates Mg(2+).

The protein belongs to the acetokinase family. Homodimer. The cofactor is Mg(2+). Mn(2+) is required as a cofactor.

It localises to the cytoplasm. The enzyme catalyses acetate + ATP = acetyl phosphate + ADP. The protein operates within metabolic intermediate biosynthesis; acetyl-CoA biosynthesis; acetyl-CoA from acetate: step 1/2. Catalyzes the formation of acetyl phosphate from acetate and ATP. Can also catalyze the reverse reaction. This chain is Acetate kinase, found in Thermotoga sp. (strain RQ2).